We begin with the raw amino-acid sequence, 213 residues long: MKEPLVMYREGFWYLVALGVLTVLGALINFWLGLLVFLLFLFVVFFFRNPRRTIPEDEKAIISPADGVVLDVAEVNESYYLKGPAVKISIFLSIFDVHVNRAPVEGQVEYVYYREGKFLPAFKSHASEINERNYIGIKNPYLQVLVVQITGFIARRIVSFVKPGDILKKGQLLGMIKFGSCTEIYLPKETVEVLVQKGQRVYGGITVIGRIKG.

Ser180 serves as the catalytic Schiff-base intermediate with substrate; via pyruvic acid. Position 180 is a pyruvic acid (Ser); by autocatalysis (Ser180).

This sequence belongs to the phosphatidylserine decarboxylase family. PSD-A subfamily. Heterodimer of a large membrane-associated beta subunit and a small pyruvoyl-containing alpha subunit. It depends on pyruvate as a cofactor. In terms of processing, is synthesized initially as an inactive proenzyme. Formation of the active enzyme involves a self-maturation process in which the active site pyruvoyl group is generated from an internal serine residue via an autocatalytic post-translational modification. Two non-identical subunits are generated from the proenzyme in this reaction, and the pyruvate is formed at the N-terminus of the alpha chain, which is derived from the carboxyl end of the proenzyme. The post-translation cleavage follows an unusual pathway, termed non-hydrolytic serinolysis, in which the side chain hydroxyl group of the serine supplies its oxygen atom to form the C-terminus of the beta chain, while the remainder of the serine residue undergoes an oxidative deamination to produce ammonia and the pyruvoyl prosthetic group on the alpha chain.

Its subcellular location is the cell membrane. It carries out the reaction a 1,2-diacyl-sn-glycero-3-phospho-L-serine + H(+) = a 1,2-diacyl-sn-glycero-3-phosphoethanolamine + CO2. It functions in the pathway phospholipid metabolism; phosphatidylethanolamine biosynthesis; phosphatidylethanolamine from CDP-diacylglycerol: step 2/2. Functionally, catalyzes the formation of phosphatidylethanolamine (PtdEtn) from phosphatidylserine (PtdSer). The protein is Phosphatidylserine decarboxylase proenzyme of Carboxydothermus hydrogenoformans (strain ATCC BAA-161 / DSM 6008 / Z-2901).